We begin with the raw amino-acid sequence, 76 residues long: U1-cyrtautoxin-As1b (76 aa).

4 disulfides stabilise this stretch: Cys-23-Cys-37, Cys-30-Cys-51, Cys-36-Cys-66, and Cys-69-Cys-76.

It belongs to the neurotoxin 21 family. In terms of tissue distribution, expressed by the venom gland.

Its subcellular location is the secreted. In terms of biological role, neurotoxin with probable ion channel impairing activity. Is both paralytic and lethal, when injected into lepidopteran larvae. In Apomastus schlingeri (Trap-door spider), this protein is U1-cyrtautoxin-As1b.